The sequence spans 542 residues: Cytochrome P450 monooxygenase 91 (542 aa).

Positions Met-1–Leu-22 are cleaved as a signal peptide. N-linked (GlcNAc...) asparagine glycosylation is found at Asn-299 and Asn-392. Cys-482 lines the heme pocket.

The protein belongs to the cytochrome P450 family. Heme is required as a cofactor.

It participates in secondary metabolite biosynthesis. Functionally, cytochrome P450 monooxygenase that is able to use dehydroabietic acid as a substrate for oxidation. This chain is Cytochrome P450 monooxygenase 91, found in Postia placenta (strain ATCC 44394 / Madison 698-R) (Brown rot fungus).